A 359-amino-acid polypeptide reads, in one-letter code: 1-deoxy-D-xylulose 5-phosphate reductoisomerase (359 aa).

Residues T7, G8, S9, I10, A31, N33, and N111 each coordinate NADPH. K112 serves as a coordination point for 1-deoxy-D-xylulose 5-phosphate. Position 113 (E113) interacts with NADPH. D131 is a Mn(2+) binding site. 1-deoxy-D-xylulose 5-phosphate-binding residues include S132, E133, S155, and H178. E133 contributes to the Mn(2+) binding site. G184 is a binding site for NADPH. 1-deoxy-D-xylulose 5-phosphate is bound by residues S191, N196, K197, and E200. Residue E200 participates in Mn(2+) binding.

Belongs to the DXR family. It depends on Mg(2+) as a cofactor. Mn(2+) is required as a cofactor.

The enzyme catalyses 2-C-methyl-D-erythritol 4-phosphate + NADP(+) = 1-deoxy-D-xylulose 5-phosphate + NADPH + H(+). It participates in isoprenoid biosynthesis; isopentenyl diphosphate biosynthesis via DXP pathway; isopentenyl diphosphate from 1-deoxy-D-xylulose 5-phosphate: step 1/6. Catalyzes the NADPH-dependent rearrangement and reduction of 1-deoxy-D-xylulose-5-phosphate (DXP) to 2-C-methyl-D-erythritol 4-phosphate (MEP). The sequence is that of 1-deoxy-D-xylulose 5-phosphate reductoisomerase from Campylobacter hominis (strain ATCC BAA-381 / DSM 21671 / CCUG 45161 / LMG 19568 / NCTC 13146 / CH001A).